We begin with the raw amino-acid sequence, 176 residues long: Large ribosomal subunit protein eL20 (176 aa).

Lys-11 is covalently cross-linked (Glycyl lysine isopeptide (Lys-Gly) (interchain with G-Cter in SUMO2)). Tyr-63 carries the phosphotyrosine modification. Ser-71 carries the phosphoserine modification. At Lys-76 the chain carries N6-succinyllysine. Ser-123 carries the phosphoserine modification. Residues Lys-128 and Lys-170 each participate in a glycyl lysine isopeptide (Lys-Gly) (interchain with G-Cter in SUMO2) cross-link.

The protein belongs to the eukaryotic ribosomal protein eL20 family. Component of the large ribosomal subunit. Binds IPO9 with high affinity.

Its subcellular location is the cytoplasm. Functionally, component of the large ribosomal subunit. The ribosome is a large ribonucleoprotein complex responsible for the synthesis of proteins in the cell. The sequence is that of Large ribosomal subunit protein eL20 (Rpl18a) from Mus musculus (Mouse).